We begin with the raw amino-acid sequence, 753 residues long: MESTPFNRRQWTSLSLRVTAKELSLVNKNKSSAIVEIFSKYQKAAEEANMERKKNNPESLPQHFRRGTLSVLKKKWENPVAGAEFHTDSLPNSSSEGGHTADYPPAEVTDKPAPGVRADREEHTQPKPRFGSRPEAVIQSRYPRSENSHDFKAQATESQKMENCLGDSRHEAEKPETSENTETSGKIEKYNVPLNRLKMMFEKGEHNQTKSLWTQSRNAGGRRLSENNCSLDDWEIGAGHLSSSAFNSEKNESKRNLELPRLSETSIKDRMAKYQAAVSKQSSPASYTNELKTSESKTHKWEQKENVPPGPEACSVHQEGSKVSTTENSLVALSVPAEDDTCNSQVKSEAQQPMHPKPLSPDARTSSLPESSPSKTAKKFQAPAKESCVECQKTVYPMERLLANQQVFHISCFRCSYCNNKLSLGTYASLHGRIYCKPHFNQLFKSKGNYDEGFGHKQHKDLWASKSDNEETLGRPAQPPNAGESPHSPGVEDAPIAKVGVLAASMEAKASSQREREDKPAETKKLRIAWPPPAELGGSGSALEEGIKVSKPKWPPEDDVCKTEAPEDVDLDLKKLRRSSSLKERSRPFTVAASFRTSSIKSPKASSPSLRKGWSESEQSEEFGGGIATMERKQTENARPSGEKENVGKSRWQGEEVPRSKDRSSFELESENFMENGANIAEDDNHVHAQQSPLEPEAPGWSGFVDTTAAKEFTTQNQKSQDVGFWEGEVVRELSVEEQIKRNRYYDEDEDEE.

M1 carries the post-translational modification N-acetylmethionine. Position 15 is a phosphoserine (S15). Residues 46-56 (EEANMERKKNN) are compositionally biased toward basic and acidic residues. 2 disordered regions span residues 46–66 (EEAN…HFRR) and 82–186 (GAEF…TSGK). A Phosphoserine modification is found at S132. Residues 143–152 (PRSENSHDFK) are compositionally biased toward basic and acidic residues. Residues 164–166 (CLG) carry the Required for interaction with NPC1L1 motif. Positions 167–177 (DSRHEAEKPET) are enriched in basic and acidic residues. Phosphoserine is present on residues S225, S230, S242, and S263. 2 disordered regions span residues 276 to 326 (AAVS…VSTT) and 341 to 379 (TCNS…TAKK). A compositionally biased stretch (polar residues) spans 278–291 (VSKQSSPASYTNEL). Residues 292 to 305 (KTSESKTHKWEQKE) are compositionally biased toward basic and acidic residues. Residues 342-351 (CNSQVKSEAQ) are compositionally biased toward polar residues. A phosphoserine mark is found at S348, S360, S367, and S372. The segment covering 363–375 (ARTSSLPESSPSK) has biased composition (polar residues). In terms of domain architecture, LIM zinc-binding spans 386–446 (ESCVECQKTV…KPHFNQLFKS (61 aa)). K437 carries the post-translational modification N6-succinyllysine. Residues S467, S485, and S488 each carry the phosphoserine modification. Disordered stretches follow at residues 467 to 493 (SDNE…GVED), 505 to 669 (SMEA…FELE), and 682 to 703 (EDDN…GWSG). Residues 491-511 (VEDAPIAKVGVLAASMEAKAS) are required for interaction with MYO5B. 2 stretches are compositionally biased toward basic and acidic residues: residues 512 to 525 (SQRE…ETKK) and 554 to 565 (WPPEDDVCKTEA). Residues 598–609 (SSIKSPKASSPS) are compositionally biased toward low complexity. A phosphoserine mark is found at S599, S602, S607, and S615. Positions 630-666 (MERKQTENARPSGEKENVGKSRWQGEEVPRSKDRSSF) are enriched in basic and acidic residues. 3 positions are modified to phosphoserine: S692, S720, and S735.

Interacts with NPC1L1; bridges NPC1L1 with MYO5B. Interacts with MYO5B; bridges MYO5B with NPC1L1. Interacts with PXN; this complex stabilizes actin dynamics. Binds to G-actin and F-actin. Interacts with LUZP1 (via C-terminus); both proteins restrict ciliation and may work together to regulate this process. Binds RAB40B (GTP-bound); interaction influences LIMA1 subcellular localization in lamellipodia during cell migration. In terms of processing, phosphorylation of the C-terminal region by MAPK1/MAPK3 reduces its association with F-actin and contributes to actin filament reorganization and enhances cell motility. Ubiquitinated by the ECS(RAB40B) complex leading to its degradation. In terms of tissue distribution, highly expressed in the small intestine, including the duodenum, jejunum, and ileum. Low expression in the liver and very low expressed in the heart, spleen, lung, brain, and pancreas. Isoform Alpha is highly expressed in embryos from day 7-11 and in adult spleen and lung. Isoform Beta expression is highest in adult kidney, testis, lung and liver, intermediate in heart, brain, spleen, skeletal muscle and low in embryos.

It is found in the cytoplasm. Its subcellular location is the cell junction. The protein localises to the focal adhesion. It localises to the cytoskeleton. The protein resides in the stress fiber. It is found in the cell membrane. Its subcellular location is the cell projection. The protein localises to the ruffle. It localises to the lamellipodium. In terms of biological role, actin-binding protein involved in actin cytoskeleton regulation and dynamics. Increases the number and size of actin stress fibers and inhibits membrane ruffling. Inhibits actin filament depolymerization. Bundles actin filaments, delays filament nucleation and reduces formation of branched filaments. Acts as a negative regulator of primary cilium formation. Plays a role in cholesterol homeostasis. Influences plasma cholesterol levels through regulation of intestinal cholesterol absorption. May act as a scaffold protein by regulating NPC1L1 transportation, an essential protein for cholesterol absorption, to the plasma membrane by recruiting MYO5B to NPC1L1, and thus facilitates cholesterol uptake. This chain is LIM domain and actin-binding protein 1 (Lima1), found in Mus musculus (Mouse).